We begin with the raw amino-acid sequence, 103 residues long: Ig kappa-b5 chain C region (103 aa).

The Ig-like domain maps to 5 to 99; it reads PTVLIFPPAP…GAGSVVQSFS (95 aa). Cysteines 26 and 85 form a disulfide.

The sequence is that of Ig kappa-b5 chain C region from Oryctolagus cuniculus (Rabbit).